A 288-amino-acid polypeptide reads, in one-letter code: Orotidine 5'-phosphate decarboxylase (288 aa).

The active-site Proton donor is lysine 97.

Belongs to the OMP decarboxylase family. Type 2 subfamily.

It carries out the reaction orotidine 5'-phosphate + H(+) = UMP + CO2. Its pathway is pyrimidine metabolism; UMP biosynthesis via de novo pathway; UMP from orotate: step 2/2. This Clostridium tetani (strain Massachusetts / E88) protein is Orotidine 5'-phosphate decarboxylase.